The sequence spans 158 residues: Ribonuclease H (158 aa).

Positions 3–144 (ELKLIHIFTD…CDQLARAAAE (142 aa)) constitute an RNase H type-1 domain. Positions 12, 50, 72, and 136 each coordinate Mg(2+). Positions 137-158 (QLARAAAEASPTQVDEGYQPES) are disordered.

Belongs to the RNase H family. Monomer. Requires Mg(2+) as cofactor.

The protein localises to the cytoplasm. The catalysed reaction is Endonucleolytic cleavage to 5'-phosphomonoester.. In terms of biological role, endonuclease that specifically degrades the RNA of RNA-DNA hybrids. This Shewanella sp. (strain ANA-3) protein is Ribonuclease H.